The sequence spans 402 residues: MKLSYLPSEFQKALPILEKIKAAGFEAYFVGGSVRDALLNRPIHDVDIASSSYPEETKQIFERTVDIGIEHGTVLVLENGGEYEVTTFRTEDVYVDYRRPSSVSFVRSLEEDLKRRDFTVNAFALNENAEVIDKFNGLADLDNRVLRAVGKAEERFNEDALRIMRGLRFAASLDFDIEEKTFEAMTSHAFLLEKISIERSFIEFDKLLLAPHWKKGIKALLATKAYQYLPDFQETAEEWQSFVADYAEDFRFTSSEQAWAATLLALKHDNPRSFLKKWKTSVNFQKTVQSLIEIFRFRMEREVTKQDVYHYGKDLLKEAETLRQAQRLDVDYERIAELDGQLLIHDKHEIVVNGGKLMKELGFKPGPDLGRTLRAIENAIVDGELANDEESIMAFVQAMKQV.

2 residues coordinate ATP: Gly-32 and Arg-35. 2 residues coordinate CTP: Gly-32 and Arg-35. Mg(2+) is bound by residues Asp-45 and Asp-47. Arg-116, Asp-159, Arg-162, Arg-165, and Arg-168 together coordinate ATP. CTP contacts are provided by Arg-116, Asp-159, Arg-162, Arg-165, and Arg-168.

The protein belongs to the tRNA nucleotidyltransferase/poly(A) polymerase family. Bacterial CCA-adding enzyme type 3 subfamily. In terms of assembly, homodimer. The cofactor is Mg(2+).

It carries out the reaction a tRNA precursor + 2 CTP + ATP = a tRNA with a 3' CCA end + 3 diphosphate. The enzyme catalyses a tRNA with a 3' CCA end + 2 CTP + ATP = a tRNA with a 3' CCACCA end + 3 diphosphate. Its function is as follows. Catalyzes the addition and repair of the essential 3'-terminal CCA sequence in tRNAs without using a nucleic acid template. Adds these three nucleotides in the order of C, C, and A to the tRNA nucleotide-73, using CTP and ATP as substrates and producing inorganic pyrophosphate. tRNA 3'-terminal CCA addition is required both for tRNA processing and repair. Also involved in tRNA surveillance by mediating tandem CCA addition to generate a CCACCA at the 3' terminus of unstable tRNAs. While stable tRNAs receive only 3'-terminal CCA, unstable tRNAs are marked with CCACCA and rapidly degraded. The sequence is that of CCA-adding enzyme from Streptococcus thermophilus (strain CNRZ 1066).